A 473-amino-acid chain; its full sequence is Adenosylhomocysteinase (473 aa).

Residues T60, D135, and E197 each contribute to the substrate site. 198–200 (TTT) is a binding site for NAD(+). Substrate-binding residues include K227 and D231. Residues N232, 261 to 266 (GFGDVG), E284, N319, 340 to 342 (IGH), and N385 each bind NAD(+).

Belongs to the adenosylhomocysteinase family. NAD(+) is required as a cofactor.

The protein localises to the cytoplasm. It carries out the reaction S-adenosyl-L-homocysteine + H2O = L-homocysteine + adenosine. It functions in the pathway amino-acid biosynthesis; L-homocysteine biosynthesis; L-homocysteine from S-adenosyl-L-homocysteine: step 1/1. Its function is as follows. May play a key role in the regulation of the intracellular concentration of adenosylhomocysteine. This Bradyrhizobium diazoefficiens (strain JCM 10833 / BCRC 13528 / IAM 13628 / NBRC 14792 / USDA 110) protein is Adenosylhomocysteinase.